Consider the following 534-residue polypeptide: ATP-dependent RNA helicase DBP3 (534 aa).

Positions 1–96 are disordered; the sequence is MGSKRKHESG…VSSSSSGYTQ (96 aa). The segment covering 8-30 has biased composition (basic and acidic residues); sequence ESGDVEVKKPKHDNEVKGKEKKE. A compositionally biased stretch (basic residues) spans 31–53; that stretch reads KKEKKEKKEKKEKKEKKEKKEKK. Over residues 54–63 the composition is skewed to basic and acidic residues; that stretch reads EKKEKNEKKE. Residues 82–92 show a composition bias toward low complexity; that stretch reads STVSTVSSSSS. The Q motif signature appears at 131-157; sequence LSFDHVQLQSKIAPIVTKFPKPTPIQS. The region spanning 160 to 330 is the Helicase ATP-binding domain; the sequence is WPYLLNGDDV…ATFMNKAVKV (171 aa). Position 173–180 (173–180) interacts with ATP; that stretch reads AETGSGKT. The DEAD box signature appears at 278–281; it reads DEAD. One can recognise a Helicase C-terminal domain in the interval 359–504; it reads RLLQLLRQYG…PVPDELLKFG (146 aa).

This sequence belongs to the DEAD box helicase family. DDX5/DBP2 subfamily.

It is found in the nucleus. It localises to the nucleolus. It catalyses the reaction ATP + H2O = ADP + phosphate + H(+). Its function is as follows. ATP-dependent RNA helicase required for 60S ribosomal subunit synthesis. Involved in efficient pre-rRNA processing, predominantly at site A3, which is necessary for the normal formation of 25S and 5.8S rRNAs. The protein is ATP-dependent RNA helicase DBP3 (DBP3) of Meyerozyma guilliermondii (strain ATCC 6260 / CBS 566 / DSM 6381 / JCM 1539 / NBRC 10279 / NRRL Y-324) (Yeast).